A 496-amino-acid polypeptide reads, in one-letter code: Aspartyl/glutamyl-tRNA(Asn/Gln) amidotransferase subunit B (496 aa).

Residues threonine 475–lysine 496 are disordered.

Belongs to the GatB/GatE family. GatB subfamily. In terms of assembly, heterotrimer of A, B and C subunits.

It carries out the reaction L-glutamyl-tRNA(Gln) + L-glutamine + ATP + H2O = L-glutaminyl-tRNA(Gln) + L-glutamate + ADP + phosphate + H(+). The enzyme catalyses L-aspartyl-tRNA(Asn) + L-glutamine + ATP + H2O = L-asparaginyl-tRNA(Asn) + L-glutamate + ADP + phosphate + 2 H(+). Allows the formation of correctly charged Asn-tRNA(Asn) or Gln-tRNA(Gln) through the transamidation of misacylated Asp-tRNA(Asn) or Glu-tRNA(Gln) in organisms which lack either or both of asparaginyl-tRNA or glutaminyl-tRNA synthetases. The reaction takes place in the presence of glutamine and ATP through an activated phospho-Asp-tRNA(Asn) or phospho-Glu-tRNA(Gln). The chain is Aspartyl/glutamyl-tRNA(Asn/Gln) amidotransferase subunit B from Haloquadratum walsbyi (strain DSM 16790 / HBSQ001).